The following is a 312-amino-acid chain: Malate dehydrogenase (312 aa).

Residues Gly-12–Gly-17 and Asp-36 contribute to the NAD(+) site. Substrate contacts are provided by Arg-87 and Arg-93. NAD(+) contacts are provided by residues Asn-100 and Leu-123–Asn-125. Asn-125 serves as a coordination point for substrate. The residue at position 149 (Ser-149) is a Phosphoserine. Arg-156 lines the substrate pocket. His-180 functions as the Proton acceptor in the catalytic mechanism.

The protein belongs to the LDH/MDH superfamily. MDH type 3 family.

The enzyme catalyses (S)-malate + NAD(+) = oxaloacetate + NADH + H(+). In terms of biological role, catalyzes the reversible oxidation of malate to oxaloacetate. This Bacillus subtilis (strain 168) protein is Malate dehydrogenase (mdh).